Reading from the N-terminus, the 368-residue chain is WD repeat-containing protein wdr-5.1 (368 aa).

A disordered region spans residues 1-64; it reads MDPAQNQPNT…APTTSQESTI (64 aa). The span at 16 to 42 shows a compositional bias: low complexity; sequence PAVEEAQGVNNSEAEAPAPAALSSVSP. WD repeat units follow at residues 77–116, 119–158, 161–200, 203–242, 246–285, 288–330, and 333–368; these read GHTK…CERT, GHKL…MAKT, GHTN…CVKT, AHSD…CVKT, DENP…TLKQ, GHEN…VVQS, and GHTQ…RSDS.

The chain is WD repeat-containing protein wdr-5.1 from Caenorhabditis briggsae.